Consider the following 329-residue polypeptide: UDP-glucose 4-epimerase (329 aa).

Residues 11–12 (YV), 31–36 (DNFSTG), 51–52 (DV), 71–75 (FAARS), threonine 115, tyrosine 139, lysine 143, and phenylalanine 167 each bind NAD(+). Substrate-binding residues include threonine 115 and tyrosine 139. Tyrosine 139 acts as the Proton acceptor in catalysis. Substrate-binding positions include asparagine 168, 185–186 (HL), 202–204 (FMF), arginine 217, and 277–280 (RAGD).

Belongs to the NAD(P)-dependent epimerase/dehydratase family. In terms of assembly, homodimer. NAD(+) is required as a cofactor.

The enzyme catalyses UDP-alpha-D-glucose = UDP-alpha-D-galactose. The protein operates within carbohydrate metabolism; galactose metabolism. Functionally, involved in the metabolism of galactose. Catalyzes the conversion of UDP-galactose (UDP-Gal) to UDP-glucose (UDP-Glc) through a mechanism involving the transient reduction of NAD. The protein is UDP-glucose 4-epimerase (galE) of Corynebacterium glutamicum (strain ATCC 13032 / DSM 20300 / JCM 1318 / BCRC 11384 / CCUG 27702 / LMG 3730 / NBRC 12168 / NCIMB 10025 / NRRL B-2784 / 534).